The sequence spans 190 residues: Threonylcarbamoyl-AMP synthase (190 aa).

In terms of domain architecture, YrdC-like spans 7–190; sequence NFVLADIVRA…ALTGKRFRQG (184 aa).

Belongs to the SUA5 family. TsaC subfamily.

Its subcellular location is the cytoplasm. The enzyme catalyses L-threonine + hydrogencarbonate + ATP = L-threonylcarbamoyladenylate + diphosphate + H2O. Required for the formation of a threonylcarbamoyl group on adenosine at position 37 (t(6)A37) in tRNAs that read codons beginning with adenine. Catalyzes the conversion of L-threonine, HCO(3)(-)/CO(2) and ATP to give threonylcarbamoyl-AMP (TC-AMP) as the acyladenylate intermediate, with the release of diphosphate. The chain is Threonylcarbamoyl-AMP synthase from Yersinia pestis bv. Antiqua (strain Angola).